Reading from the N-terminus, the 146-residue chain is Hemoglobin subunit beta (146 aa).

Alanine 1 carries the N-acetylalanine modification. Residues serine 2–histidine 146 form the Globin domain. Histidine 63 and histidine 92 together coordinate heme b.

The protein belongs to the globin family. As to quaternary structure, heterotetramer of two alpha chains and two beta chains. In terms of tissue distribution, red blood cells.

Its function is as follows. Involved in oxygen transport from the lung to the various peripheral tissues. The sequence is that of Hemoglobin subunit beta (HBB) from Crocodylus niloticus (Nile crocodile).